A 63-amino-acid chain; its full sequence is Large ribosomal subunit protein bL28 (63 aa).

It belongs to the bacterial ribosomal protein bL28 family.

This is Large ribosomal subunit protein bL28 from Clostridium beijerinckii (strain ATCC 51743 / NCIMB 8052) (Clostridium acetobutylicum).